We begin with the raw amino-acid sequence, 260 residues long: Neurotrophin-3 (260 aa).

The signal sequence occupies residues 1-18; it reads MSILFYVMFLPYLCGIHA. Positions 19–141 are excised as a propeptide; that stretch reads TNMDKRNLPE…VNNRTSRRKR (123 aa). Asn-134 carries an N-linked (GlcNAc...) asparagine glycan. 3 disulfide bridges follow: Cys-155/Cys-220, Cys-198/Cys-249, and Cys-208/Cys-251.

The protein belongs to the NGF-beta family.

The protein localises to the secreted. Its function is as follows. Seems to promote the survival of visceral and proprioceptive sensory neurons. This Xenopus laevis (African clawed frog) protein is Neurotrophin-3 (ntf3).